The sequence spans 337 residues: UbiA prenyltransferase domain-containing protein 1 (337 aa).

N-acetylalanine is present on alanine 2. 8 helical membrane-spanning segments follow: residues 82 to 102, 133 to 153, 159 to 179, 187 to 207, 208 to 228, 244 to 266, 276 to 296, and 314 to 334; these read LLVG…LVNT, FGVF…CLSP, LALI…GIGF, LVIL…VQVG, SLAV…EAVL, IVTL…LLFL, THCS…FSLE, and LNLL…AGSL.

Belongs to the UbiA prenyltransferase family. As to quaternary structure, interacts with HMGCR and SOAT1.

Its subcellular location is the endoplasmic reticulum membrane. It localises to the golgi apparatus membrane. The protein resides in the mitochondrion membrane. It carries out the reaction menadiol + (2E,6E,10E)-geranylgeranyl diphosphate = menaquinol-4 + diphosphate. The catalysed reaction is all-trans-decaprenyl diphosphate + 4-hydroxybenzoate = 4-hydroxy-3-(all-trans-decaprenyl)benzoate + diphosphate. It participates in quinol/quinone metabolism; menaquinone biosynthesis. It functions in the pathway cofactor biosynthesis; ubiquinone biosynthesis. Functionally, prenyltransferase that mediates the formation of menaquinone-4 (MK-4) and coenzyme Q10. MK-4 is a vitamin K2 isoform required for endothelial cell development. Mediates the conversion of phylloquinone (PK) into MK-4, probably by cleaving the side chain of phylloquinone (PK) to release 2-methyl-1,4-naphthoquinone (menadione; K3) and then prenylating it with geranylgeranyl pyrophosphate (GGPP) to form MK-4. Also plays a role in cardiovascular development independently of MK-4 biosynthesis, by acting as a coenzyme Q10 biosynthetic enzyme: coenzyme Q10, also named ubiquinone, plays an important antioxidant role in the cardiovascular system. Mediates biosynthesis of coenzyme Q10 in the Golgi membrane, leading to protect cardiovascular tissues from NOS3/eNOS-dependent oxidative stress. The chain is UbiA prenyltransferase domain-containing protein 1 (UBIAD1) from Ailuropoda melanoleuca (Giant panda).